An 87-amino-acid polypeptide reads, in one-letter code: MSKGHSLQDPYLNVLRKERIPVSIYLVNGIKLQGQVESFDQFVVLLKNTVSQMVYKHAISTVVPSRPVRVPMLNPESTGNDDMESGA.

One can recognise a Sm domain in the interval 9 to 68 (DPYLNVLRKERIPVSIYLVNGIKLQGQVESFDQFVVLLKNTVSQMVYKHAISTVVPSRPV).

This sequence belongs to the Hfq family. As to quaternary structure, homohexamer.

In terms of biological role, RNA chaperone that binds small regulatory RNA (sRNAs) and mRNAs to facilitate mRNA translational regulation in response to envelope stress, environmental stress and changes in metabolite concentrations. Also binds with high specificity to tRNAs. This chain is RNA-binding protein Hfq, found in Teredinibacter turnerae (strain ATCC 39867 / T7901).